Reading from the N-terminus, the 150-residue chain is D-aminoacyl-tRNA deacylase (150 aa).

A Gly-cisPro motif, important for rejection of L-amino acids motif is present at residues G140 to P141.

The protein belongs to the DTD family. Homodimer.

The protein localises to the cytoplasm. It carries out the reaction glycyl-tRNA(Ala) + H2O = tRNA(Ala) + glycine + H(+). It catalyses the reaction a D-aminoacyl-tRNA + H2O = a tRNA + a D-alpha-amino acid + H(+). The catalysed reaction is D-tyrosyl-tRNA(Tyr) + H2O = D-tyrosine + tRNA(Tyr). Its function is as follows. An aminoacyl-tRNA editing enzyme that deacylates mischarged D-aminoacyl-tRNAs. Hydrolyzes D-tyrosyl-tRNA(Tyr) into D-tyrosine and free tRNA(Tyr). May also deacylate mischarged D-leucyl-tRNA(Leu). Also deacylates mischarged glycyl-tRNA(Ala), protecting cells against glycine mischarging by AlaRS. Acts via tRNA-based rather than protein-based catalysis; rejects L-amino acids rather than detecting D-amino acids in the active site. By recycling D-aminoacyl-tRNA to D-amino acids and free tRNA molecules, this enzyme counteracts the toxicity associated with the formation of D-aminoacyl-tRNA entities in vivo and helps enforce protein L-homochirality. This Saccharomyces cerevisiae (strain ATCC 204508 / S288c) (Baker's yeast) protein is D-aminoacyl-tRNA deacylase.